The primary structure comprises 831 residues: Periplasmic nitrate reductase (831 aa).

Residues 1-29 (MKFTRREFMKAQAAASAAAVAGIALPATA) constitute a signal peptide (tat-type signal). In terms of domain architecture, 4Fe-4S Mo/W bis-MGD-type spans 41–97 (IKWEKAPCRFCGTGCSVLVGTQHGRVVATQGDPESPVNKGLNCVKGYFLSKIMYGKD). Cys-48, Cys-51, Cys-55, and Cys-83 together coordinate [4Fe-4S] cluster. Mo-bis(molybdopterin guanine dinucleotide)-binding positions include Lys-85, Gln-152, Asn-177, Cys-181, 214-221 (WGSNMAEM), 245-249 (STYTH), 264-266 (QSD), Met-374, Gln-378, Asn-484, 510-511 (SD), Lys-533, Asp-560, and 720-729 (TGRVLEHWHS). A substrate-binding site is contributed by Trp-796. Residues Asn-804 and Lys-821 each contribute to the Mo-bis(molybdopterin guanine dinucleotide) site.

The protein belongs to the prokaryotic molybdopterin-containing oxidoreductase family. NasA/NapA/NarB subfamily. As to quaternary structure, component of the periplasmic nitrate reductase NapAB complex composed of NapA and NapB. Requires [4Fe-4S] cluster as cofactor. It depends on Mo-bis(molybdopterin guanine dinucleotide) as a cofactor. Post-translationally, predicted to be exported by the Tat system. The position of the signal peptide cleavage has not been experimentally proven.

Its subcellular location is the periplasm. It carries out the reaction 2 Fe(II)-[cytochrome] + nitrate + 2 H(+) = 2 Fe(III)-[cytochrome] + nitrite + H2O. Its function is as follows. Catalytic subunit of the periplasmic nitrate reductase complex NapAB. Receives electrons from NapB and catalyzes the reduction of nitrate to nitrite. The chain is Periplasmic nitrate reductase from Psychromonas ingrahamii (strain DSM 17664 / CCUG 51855 / 37).